Reading from the N-terminus, the 250-residue chain is Probable transcriptional regulatory protein RER_29220 (250 aa).

It belongs to the TACO1 family.

The protein localises to the cytoplasm. This chain is Probable transcriptional regulatory protein RER_29220, found in Rhodococcus erythropolis (strain PR4 / NBRC 100887).